Reading from the N-terminus, the 269-residue chain is uncharacterized protein (269 aa).

ATP contacts are provided by residues 12-19 and 130-137; these read GKGGTGKS and GYLIVGKS.

To M.jannaschii MJ0578.

This is an uncharacterized protein from Methanocaldococcus jannaschii (strain ATCC 43067 / DSM 2661 / JAL-1 / JCM 10045 / NBRC 100440) (Methanococcus jannaschii).